Here is a 342-residue protein sequence, read N- to C-terminus: GTPase Obg (342 aa).

One can recognise an Obg domain in the interval 1–159 (MQFIDQAKIE…KQLRLELKLL (159 aa)). In terms of domain architecture, OBG-type G spans 160–330 (AEVGIIGLPN…MLQEIWGILD (171 aa)). Residues 166–173 (GLPNAGKS), 191–195 (FTTLI), 213–216 (DIPG), 280–283 (NKID), and 311–313 (SAV) contribute to the GTP site. The Mg(2+) site is built by Ser-173 and Thr-193.

The protein belongs to the TRAFAC class OBG-HflX-like GTPase superfamily. OBG GTPase family. Monomer. Requires Mg(2+) as cofactor.

The protein localises to the cytoplasm. An essential GTPase which binds GTP, GDP and possibly (p)ppGpp with moderate affinity, with high nucleotide exchange rates and a fairly low GTP hydrolysis rate. Plays a role in control of the cell cycle, stress response, ribosome biogenesis and in those bacteria that undergo differentiation, in morphogenesis control. The protein is GTPase Obg of Nostoc punctiforme (strain ATCC 29133 / PCC 73102).